The following is a 193-amino-acid chain: Activity-regulated cytoskeleton associated protein 2 (193 aa).

It belongs to the ARC/ARG3.1 family. As to quaternary structure, homooligomer; homooligomerizes into virion-like capsids.

It localises to the extracellular vesicle membrane. Self-assembles into virion-like capsids that encapsulate RNAs and mediate intercellular RNA transfer. Arc2 protein is released from cells in extracellular vesicles that mediate the transfer of mRNA into neighboring cells. This is Activity-regulated cytoskeleton associated protein 2 from Drosophila melanogaster (Fruit fly).